A 64-amino-acid polypeptide reads, in one-letter code: Large ribosomal subunit protein bL33m (64 aa).

This sequence belongs to the bacterial ribosomal protein bL33 family. In terms of assembly, component of the mitochondrial ribosome large subunit (39S) which comprises a 16S rRNA and about 50 distinct proteins.

It is found in the mitochondrion. In Drosophila melanogaster (Fruit fly), this protein is Large ribosomal subunit protein bL33m (mRpL33).